Reading from the N-terminus, the 77-residue chain is RNA-binding protein Hfq (77 aa).

The 61-residue stretch at Asp10–Ile70 folds into the Sm domain.

It belongs to the Hfq family. Homohexamer.

Functionally, RNA chaperone that binds small regulatory RNA (sRNAs) and mRNAs to facilitate mRNA translational regulation in response to envelope stress, environmental stress and changes in metabolite concentrations. Also binds with high specificity to tRNAs. The sequence is that of RNA-binding protein Hfq from Clostridium botulinum (strain Eklund 17B / Type B).